Consider the following 638-residue polypeptide: Phosphomethylpyrimidine synthase (638 aa).

Substrate-binding positions include Asn235, Met264, Tyr293, His329, 349-351, 390-393, and Glu429; these read SRG and DGLR. Zn(2+) is bound at residue His433. Residue Tyr456 coordinates substrate. His497 is a Zn(2+) binding site. [4Fe-4S] cluster contacts are provided by Cys577, Cys580, and Cys585.

The protein belongs to the ThiC family. Homodimer. [4Fe-4S] cluster serves as cofactor.

The catalysed reaction is 5-amino-1-(5-phospho-beta-D-ribosyl)imidazole + S-adenosyl-L-methionine = 4-amino-2-methyl-5-(phosphooxymethyl)pyrimidine + CO + 5'-deoxyadenosine + formate + L-methionine + 3 H(+). It functions in the pathway cofactor biosynthesis; thiamine diphosphate biosynthesis. Catalyzes the synthesis of the hydroxymethylpyrimidine phosphate (HMP-P) moiety of thiamine from aminoimidazole ribotide (AIR) in a radical S-adenosyl-L-methionine (SAM)-dependent reaction. The sequence is that of Phosphomethylpyrimidine synthase from Polaromonas naphthalenivorans (strain CJ2).